A 611-amino-acid chain; its full sequence is Elongation factor 1 alpha-like protein (611 aa).

Disordered stretches follow at residues 1-21 (MAYS…DEGE) and 105-138 (SISQ…DEKT). Ser-124 carries the phosphoserine modification. The segment covering 126–138 (GERNGEEANDEKT) has biased composition (basic and acidic residues). The tr-type G domain maps to 165-390 (LPHLSFVVLG…LENAAFKISK (226 aa)). A G1 region spans residues 174 to 181 (GHVDAGKS). 174 to 181 (GHVDAGKS) contacts GTP. The segment at 230–234 (GVTVS) is G2. A G3 region spans residues 251–254 (DAPG). GTP-binding positions include 313-316 (NKMD) and 352-354 (SGF). The G4 stretch occupies residues 313–316 (NKMD). The segment at 352-354 (SGF) is G5.

This sequence belongs to the TRAFAC class translation factor GTPase superfamily. Classic translation factor GTPase family. In terms of assembly, component of the Dom34-Hbs1 complex, also named Pelota-HBS1L complex, composed of DOM34 and HBS1.

It is found in the cytoplasm. The catalysed reaction is GTP + H2O = GDP + phosphate + H(+). Functionally, GTPase component of the Dom34-Hbs1 complex, a complex that recognizes stalled ribosomes and triggers the No-Go Decay (NGD) pathway. The Dom34-Hbs1 complex recognizes ribosomes stalled at the 3' end of an mRNA and engages stalled ribosomes by destabilizing mRNA in the mRNA channel. Following ribosome-binding, the Pelota-HBS1L complex promotes the disassembly of stalled ribosomes, followed by degradation of damaged mRNAs as part of the NGD pathway. The Dom34-Hbs1 complex is also involved in non-functional rRNA decay. This is Elongation factor 1 alpha-like protein from Saccharomyces cerevisiae (strain ATCC 204508 / S288c) (Baker's yeast).